A 120-amino-acid chain; its full sequence is MFLLYEYDIFWTFLIISILIPILAFLISGILAPIRKGPEKLSSYESGIEPMGDAWLQFQIRYYMFALVFVVFDVETVFLYPWAMSFDVLGVSVFIEALIFVLILIVGSVYAWRKGALEWS.

3 consecutive transmembrane segments (helical) span residues 14–34 (LIISILIPILAFLISGILAPI), 64–84 (MFALVFVVFDVETVFLYPWAM), and 88–108 (VLGVSVFIEALIFVLILIVGS).

The protein belongs to the complex I subunit 3 family. NDH is composed of at least 16 different subunits, 5 of which are encoded in the nucleus.

It localises to the plastid. The protein localises to the chloroplast thylakoid membrane. It catalyses the reaction a plastoquinone + NADH + (n+1) H(+)(in) = a plastoquinol + NAD(+) + n H(+)(out). It carries out the reaction a plastoquinone + NADPH + (n+1) H(+)(in) = a plastoquinol + NADP(+) + n H(+)(out). In terms of biological role, NDH shuttles electrons from NAD(P)H:plastoquinone, via FMN and iron-sulfur (Fe-S) centers, to quinones in the photosynthetic chain and possibly in a chloroplast respiratory chain. The immediate electron acceptor for the enzyme in this species is believed to be plastoquinone. Couples the redox reaction to proton translocation, and thus conserves the redox energy in a proton gradient. The sequence is that of NAD(P)H-quinone oxidoreductase subunit 3, chloroplastic from Cicer arietinum (Chickpea).